The primary structure comprises 555 residues: Potassium-transporting ATPase potassium-binding subunit (555 aa).

10 consecutive transmembrane segments (helical) span residues 2 to 22, 60 to 80, 130 to 150, 173 to 193, 246 to 266, 278 to 298, 374 to 394, 412 to 432, 483 to 503, and 525 to 545; these read IWVAVVITMLLFILVAKPTGI, QYALSLVLLNGFMIVVVYFIF, IGITFLMFAAPATTLAIVMAF, VFLPIAFIAALVFVALGVPQT, MSNILQMMLMMLLPTALPFTY, ILFVSLFMVFLLGFITITTSE, AGFVNIIMYAIIAVFISGLMV, LIAVTILFHPLLILGFSALAL, LVMFLGRYFSLITMLAVAASL, and GIFIGTIVIVGALTFFPMLVL.

The protein belongs to the KdpA family. As to quaternary structure, the system is composed of three essential subunits: KdpA, KdpB and KdpC.

Its subcellular location is the cell membrane. Functionally, part of the high-affinity ATP-driven potassium transport (or Kdp) system, which catalyzes the hydrolysis of ATP coupled with the electrogenic transport of potassium into the cytoplasm. This subunit binds the extracellular potassium ions and delivers the ions to the membrane domain of KdpB through an intramembrane tunnel. The chain is Potassium-transporting ATPase potassium-binding subunit from Bacillus mycoides (strain KBAB4) (Bacillus weihenstephanensis).